Reading from the N-terminus, the 63-residue chain is Protein BP4A (63 aa).

In terms of tissue distribution, pollen specific.

The polypeptide is Protein BP4A (BP4A) (Brassica napus (Rape)).